Consider the following 2151-residue polypeptide: Protein PRR14L (2151 aa).

Composition is skewed to basic and acidic residues over residues 112–123 (KRSESMEPKVFR) and 134–154 (EPSE…EEKT). Disordered regions lie at residues 112-160 (KRSE…SQED), 206-225 (GTKT…KDLS), and 314-350 (QLHG…SDLS). S157 carries the phosphoserine modification. The span at 322-350 (QPSSTHDSPTATSPLKENSEVSCFTSDLS) shows a compositional bias: polar residues. A phosphoserine mark is found at S582 and S945. A disordered region spans residues 974-1017 (SNQNRPDECKSEGQSAKEMLSSDQRETVTEPHGEVNHNQKDLLV). Positions 996 to 1013 (DQRETVTEPHGEVNHNQK) are enriched in basic and acidic residues. Residue S1029 is modified to Phosphoserine. Positions 1091–1103 (DSRSTLSRRELDA) are enriched in basic and acidic residues. Disordered stretches follow at residues 1091-1115 (DSRS…DSDF), 1178-1226 (DSHY…SCHD), 1782-1802 (TGVH…PLQD), and 1986-2012 (AACP…KVSQ). Residues 1178–1187 (DSHYGQQDKG) are compositionally biased toward polar residues. Basic and acidic residues predominate over residues 1188 to 1201 (TSLRETQEMTEGSR).

The protein is Protein PRR14L (PRR14L) of Homo sapiens (Human).